We begin with the raw amino-acid sequence, 318 residues long: uncharacterized protein (318 aa).

It belongs to the glycosyltransferase 2 family.

This is an uncharacterized protein from Rickettsia typhi (strain ATCC VR-144 / Wilmington).